The sequence spans 188 residues: Putative 3-methyladenine DNA glycosylase (188 aa).

The protein belongs to the DNA glycosylase MPG family.

This Ehrlichia ruminantium (Cowdria ruminantium) protein is Putative 3-methyladenine DNA glycosylase.